A 55-amino-acid chain; its full sequence is Photosystem II reaction center X protein (55 aa).

The chain crosses the membrane as a helical span at residues 24–44 (IGSFLAAAALIVVPAASFLLW).

The protein belongs to the PsbX family. Type 2 subfamily. As to quaternary structure, PSII consists of a core antenna complex that captures photons, and an electron transfer chain that converts photonic excitation into a charge separation. PSII forms dimeric complexes.

The protein resides in the cellular thylakoid membrane. In terms of biological role, involved in the binding and/or turnover of quinones at the Q(B) site of Photosystem II. This is Photosystem II reaction center X protein from Prochlorococcus marinus (strain SARG / CCMP1375 / SS120).